We begin with the raw amino-acid sequence, 353 residues long: MTAILERRESTSLWGRFCNWVTSTENRLYIGWFGVLMIPTLLTATSVFIIAFIAAPPVDIDGIREPVSGSLLYGNNIISGAVIPTSAAIGLHFYPIWEAASVDEWLYNGGPYELIVLHFLLGVACYMGREWELSFRLGMRPWIAVAYSAPVAAATAVFLIYPIGQGSFSDGMPLGISGTFNFMIVFQAEHNILMHPFHMLGVAGVFGGSLFSAMHGSLVTSSLIRETTENESANEGYRFGQEEETYNIVAAHGYFGRLIFQYASFNNSRSLHFFLAAWPVVGIWFTALGISTMAFNLNGFNFNQSVVDSQGRVINTWADIINRANLGMEVMHERNAHNFPLDLAAVEAPSTIG.

N-acetylthreonine is present on Thr-2. Position 2 is a phosphothreonine (Thr-2). Helical transmembrane passes span 29–46 (YIGW…TATS), 118–133 (HFLL…EWEL), and 142–156 (WIAV…AATA). A chlorophyll a-binding site is contributed by His-118. Tyr-126 contacts pheophytin a. Positions 170 and 189 each coordinate [CaMn4O5] cluster. A helical membrane pass occupies residues 197–218 (FHMLGVAGVFGGSLFSAMHGSL). His-198 is a chlorophyll a binding site. A quinone contacts are provided by residues His-215 and 264 to 265 (SF). His-215 is a Fe cation binding site. His-272 provides a ligand contact to Fe cation. Residues 274-288 (FLAAWPVVGIWFTAL) traverse the membrane as a helical segment. His-332, Glu-333, Asp-342, and Ala-344 together coordinate [CaMn4O5] cluster. Residues 345–353 (AVEAPSTIG) constitute a propeptide that is removed on maturation.

Belongs to the reaction center PufL/M/PsbA/D family. As to quaternary structure, PSII is composed of 1 copy each of membrane proteins PsbA, PsbB, PsbC, PsbD, PsbE, PsbF, PsbH, PsbI, PsbJ, PsbK, PsbL, PsbM, PsbT, PsbX, PsbY, PsbZ, Psb30/Ycf12, at least 3 peripheral proteins of the oxygen-evolving complex and a large number of cofactors. It forms dimeric complexes. The cofactor is The D1/D2 heterodimer binds P680, chlorophylls that are the primary electron donor of PSII, and subsequent electron acceptors. It shares a non-heme iron and each subunit binds pheophytin, quinone, additional chlorophylls, carotenoids and lipids. D1 provides most of the ligands for the Mn4-Ca-O5 cluster of the oxygen-evolving complex (OEC). There is also a Cl(-1) ion associated with D1 and D2, which is required for oxygen evolution. The PSII complex binds additional chlorophylls, carotenoids and specific lipids.. In terms of processing, tyr-161 forms a radical intermediate that is referred to as redox-active TyrZ, YZ or Y-Z. Post-translationally, C-terminally processed by CTPA; processing is essential to allow assembly of the oxygen-evolving complex and thus photosynthetic growth.

The protein localises to the plastid. Its subcellular location is the chloroplast thylakoid membrane. The catalysed reaction is 2 a plastoquinone + 4 hnu + 2 H2O = 2 a plastoquinol + O2. Its function is as follows. Photosystem II (PSII) is a light-driven water:plastoquinone oxidoreductase that uses light energy to abstract electrons from H(2)O, generating O(2) and a proton gradient subsequently used for ATP formation. It consists of a core antenna complex that captures photons, and an electron transfer chain that converts photonic excitation into a charge separation. The D1/D2 (PsbA/PsbD) reaction center heterodimer binds P680, the primary electron donor of PSII as well as several subsequent electron acceptors. The protein is Photosystem II protein D1 of Lemna minor (Common duckweed).